We begin with the raw amino-acid sequence, 408 residues long: Homogentisate geranylgeranyltransferase (408 aa).

A chloroplast-targeting transit peptide spans 1-68 (MQATTAAAAA…SAISQATSPR (68 aa)). A run of 9 helical transmembrane segments spans residues 122–142 (HTIF…MKSI), 149–169 (VLKG…YVVG), 194–214 (SVAT…SIGI), 217–237 (GSVP…AYSI), 248–268 (ALLA…LAFF), 286–306 (LVFA…FKDI), 329–349 (VYQL…VVGA), 352–372 (THLL…LTLW), and 386–406 (VTSF…LIPF).

The protein belongs to the UbiA prenyltransferase family.

It is found in the plastid. It localises to the chloroplast membrane. The catalysed reaction is homogentisate + (2E,6E,10E)-geranylgeranyl diphosphate + H(+) = 6-geranylgeranyl-2-methylbenzene-1,4-diol + CO2 + diphosphate. It participates in cofactor biosynthesis; tocopherol biosynthesis. Functionally, involved in the synthesis of tocotrienol (vitamin E). Catalyzes the condensation of homogentisate and geranylgeranyl diphosphate to form 2-methyl-6-geranylgeranylbenzoquinol. Possesses low activity with phytyl diphosphate as substrate. This Triticum aestivum (Wheat) protein is Homogentisate geranylgeranyltransferase.